We begin with the raw amino-acid sequence, 66 residues long: MKTDIHPKYVAAKIKCACGTVIETRSTSGDISVEICSNCHPFFTGKSKLVDTTGRVDKFKKKYKMK.

Residues cysteine 16, cysteine 18, cysteine 36, and cysteine 39 each coordinate Zn(2+).

Belongs to the bacterial ribosomal protein bL31 family. Type A subfamily. Part of the 50S ribosomal subunit. Requires Zn(2+) as cofactor.

Binds the 23S rRNA. The protein is Large ribosomal subunit protein bL31 of Leptospira biflexa serovar Patoc (strain Patoc 1 / Ames).